The primary structure comprises 382 residues: Mannitol-1-phosphate 5-dehydrogenase (382 aa).

NAD(+) is bound at residue 3–14 (ALHFGAGNIGRG). N6-acetyllysine is present on Lys-269.

This sequence belongs to the mannitol dehydrogenase family.

The enzyme catalyses D-mannitol 1-phosphate + NAD(+) = beta-D-fructose 6-phosphate + NADH + H(+). The polypeptide is Mannitol-1-phosphate 5-dehydrogenase (Escherichia coli O139:H28 (strain E24377A / ETEC)).